The primary structure comprises 403 residues: Poly(rC)-binding protein 4 (403 aa).

3 consecutive KH domains span residues threonine 17–glycine 67, proline 101–glycine 154, and threonine 241–glycine 293.

Widely expressed, with highest levels in testis and lowest in heart.

It is found in the cytoplasm. Its function is as follows. Single-stranded nucleic acid binding protein that binds preferentially to oligo dC. In Mus musculus (Mouse), this protein is Poly(rC)-binding protein 4 (Pcbp4).